The following is a 425-amino-acid chain: Lysosome-associated membrane glycoprotein 2 (425 aa).

Residues 1 to 27 (MAPPRCPAGLALLLLLLGACGFFQSYA) form the signal peptide. Residues 28 to 192 (VEVDVKDASN…SKKESRCYAD (165 aa)) form a first lumenal domain region. Topologically, residues 28–389 (VEVDVKDASN…EECFADSDLN (362 aa)) are lumenal. 20 N-linked (GlcNAc...) asparagine glycosylation sites follow: asparagine 37, asparagine 56, asparagine 62, asparagine 74, asparagine 100, asparagine 105, asparagine 120, asparagine 163, asparagine 170, asparagine 179, asparagine 206, asparagine 232, asparagine 239, asparagine 252, asparagine 276, asparagine 287, asparagine 298, asparagine 312, asparagine 320, and asparagine 331. A disulfide bridge connects residues cysteine 40 and cysteine 78. Cysteine 153 and cysteine 189 are disulfide-bonded. The segment at 193 to 238 (TPTAAPTVLPTVANVTTASTTISPAPTTAPKPAENPVTGNYSLKTG) is hinge. A second lumenal domain region spans residues 239–390 (NKTCLLATVG…ECFADSDLNF (152 aa)). An intrachain disulfide couples cysteine 242 to cysteine 274. A disulfide bond links cysteine 345 and cysteine 382. Residues 390–414 (FLIPVAVGMALGFLIILVFISYIIG) form a helical membrane-spanning segment. The Cytoplasmic portion of the chain corresponds to 415–425 (RRKSRTGYQSV). The important for binding and subsequent lysosomal degradation of target proteins stretch occupies residues 416–419 (RKSR).

It belongs to the LAMP family. Monomer. Forms large homooligomers. Post-translationally, extensively N-glycosylated. Contains a minor proportion of O-linked glycans.

It is found in the lysosome membrane. Its subcellular location is the endosome membrane. It localises to the cell membrane. The protein localises to the cytoplasmic vesicle. The protein resides in the autophagosome membrane. Lysosomal membrane glycoprotein which plays an important role in lysosome biogenesis, lysosomal pH regulation and autophagy. Plays an important role in chaperone-mediated autophagy, a process that mediates lysosomal degradation of proteins in response to various stresses and as part of the normal turnover of proteins with a long biological half-live. In the chaperone-mediated autophagy, acts downstream of chaperones, such as HSPA8/HSC70, which recognize and bind substrate proteins and mediate their recruitment to lysosomes, where target proteins bind LAMP2. Plays a role in lysosomal protein degradation in response to starvation. Required for the fusion of autophagosomes with lysosomes during autophagy. The protein is Lysosome-associated membrane glycoprotein 2 (LAMP2) of Gallus gallus (Chicken).